A 179-amino-acid polypeptide reads, in one-letter code: Ribosome maturation factor RimM (179 aa).

The PRC barrel domain occupies lysine 100–leucine 176.

It belongs to the RimM family. Binds ribosomal protein uS19.

It localises to the cytoplasm. An accessory protein needed during the final step in the assembly of 30S ribosomal subunit, possibly for assembly of the head region. Essential for efficient processing of 16S rRNA. May be needed both before and after RbfA during the maturation of 16S rRNA. It has affinity for free ribosomal 30S subunits but not for 70S ribosomes. This Prochlorococcus marinus (strain AS9601) protein is Ribosome maturation factor RimM.